The following is a 675-amino-acid chain: Pesticidal crystal protein Cry10Aa (675 aa).

This sequence belongs to the delta endotoxin family.

Functionally, promotes colloidosmotic lysis by binding to the midgut epithelial cells of mosquitos. Active on Aedes aegypti. This chain is Pesticidal crystal protein Cry10Aa (cry10Aa), found in Bacillus thuringiensis subsp. israelensis.